Consider the following 591-residue polypeptide: ESX-1 secretion system protein EccCb1 (591 aa).

FtsK domains follow at residues 65 to 259 (LQDV…NETQ) and 359 to 545 (LTPA…EKQE). Residues 84-91 (GAPQTGKS) and 376-383 (GAAKSGKT) contribute to the ATP site.

Part of the ESX-1 / type VII secretion system (T7SS), which is composed of cytosolic and membrane components. The ESX-1 membrane complex is composed of EccB1, EccCa1, EccCb1, EccD1 and EccE1. Interacts with EccCa1, EspK and the C-terminus of EsxB. Residues 1-261 interact with EsxB and an artificial EsxB-EsxA heterodimer.

It is found in the cytoplasm. EsxB binding to the second FtsK domain of EccCb1 causes multimerization; a subsequent unknown step relieves the allosteric inhibition of linker 2 on FtsK domain 1 (in EccCa1 subunit), activating the ATPase activity. Its function is as follows. Part of the ESX-1 specialized secretion system, which delivers several virulence factors to host cells during infection, including the key virulence factors EsxA (ESAT-6) and EsxB (CFP-10). EccCb1 may link the cytosolic components of the system with the membrane components. The chain is ESX-1 secretion system protein EccCb1 from Mycobacterium tuberculosis (strain ATCC 25618 / H37Rv).